An 862-amino-acid polypeptide reads, in one-letter code: MDLPKAYDPKSVEPKWAEKWAKNPFVANPKSGKPPFVIFMPPPNVTGSLHMGHALDNSLQDALIRYKRMRGFEAVWLPGTDHAGIATQVVVERLLLKEGKTRHDLGREKFLERVWQWKEESGGTILKQLKRLGASADWSREAFTMDEKRSRAVRYAFSRYYHEGLAYRAPRLVNWCPRCETTLSDLEVETEPTPGKLYTLRYEVEGGGFIAIATVRPETVFADQAIAVHPEDERYRHLIGKRARIPLTEVWIPILADPAVEKDFGTGALKVTPAHDPLDYEIGERHGLEPVSVINLEGRMEGERVPEALRGLDRFEARRKAVELFREAGHLVKEEDYTIALATCSRCGTPIEYAIFPQWWLRMKPLAEEVLKGLRRGDIAFVPERWKKVNIDWLENVKDWNISRQLWWGHQIPAWYCEDCQAVNVPKPERYLEDPTSCEACGSPRLKRDEDVFDTWFSSALWPLSTLGWPEETEDLKAFYPGDVLVTGYDILFLWVSRMEVSGYHFMGERPFKTVLLHGLVLDEKGQKMSKSKGNVIDPLEMVERYGADALRFALTYLATGGQDIRLDLRWLEMARNFANKLYNAARFVLLSREGFQAKEDTPTLADRFMRSRLSQGVEEITALYEALDLAQAAREVYELVWSEFCDWYLEAAKPALKAGNAHTLRTLEEVLAVLLKLLHPMMPFLTSELYQALTGKEELALEAWPEPGGRDEEAERAFEALKQAVTAVRALKAEAGLPPAQEVRVYLEGETAPVGENLEVFRFLARADLLPERPAKALVKAMPRVTARMPLEGLLDVEEWRRRQEKRLKELLALAERSQRKLASPGFREKAPKEVVEAEEARLRENLEQAERIREALSQIG.

The short motif at 43 to 53 is the 'HIGH' region element; sequence PNVTGSLHMGH. Residues C176, C179, C344, C347, C417, C420, C438, and C441 each contribute to the Zn(2+) site. A 'KMSKS' region motif is present at residues 528 to 532; sequence KMSKS. K531 contacts ATP. A coiled-coil region spans residues 802–862; that stretch reads RRRQEKRLKE…RIREALSQIG (61 aa).

It belongs to the class-I aminoacyl-tRNA synthetase family. ValS type 1 subfamily. As to quaternary structure, monomer. Zn(2+) serves as cofactor.

It localises to the cytoplasm. It carries out the reaction tRNA(Val) + L-valine + ATP = L-valyl-tRNA(Val) + AMP + diphosphate. Functionally, catalyzes the attachment of valine to tRNA(Val). As ValRS can inadvertently accommodate and process structurally similar amino acids such as threonine, to avoid such errors, it has a 'posttransfer' editing activity that hydrolyzes mischarged Thr-tRNA(Val) in a tRNA-dependent manner. The sequence is that of Valine--tRNA ligase from Thermus thermophilus (strain ATCC BAA-163 / DSM 7039 / HB27).